The sequence spans 58 residues: Photosystem II reaction center protein K (58 aa).

A propeptide spanning residues 1–21 is cleaved from the precursor; sequence MLNMISTFFDSSSNFSEAFLA. A helical membrane pass occupies residues 29-49; it reads IFDPIVDVMPIIPVFFLLLAF.

It belongs to the PsbK family. In terms of assembly, PSII is composed of 1 copy each of membrane proteins PsbA, PsbB, PsbC, PsbD, PsbE, PsbF, PsbH, PsbI, PsbJ, PsbK, PsbL, PsbM, PsbT, PsbX, PsbY, PsbZ, Psb30/Ycf12, at least 3 peripheral proteins of the oxygen-evolving complex and a large number of cofactors. It forms dimeric complexes.

Its subcellular location is the plastid. The protein resides in the chloroplast thylakoid membrane. Its function is as follows. One of the components of the core complex of photosystem II (PSII). PSII is a light-driven water:plastoquinone oxidoreductase that uses light energy to abstract electrons from H(2)O, generating O(2) and a proton gradient subsequently used for ATP formation. It consists of a core antenna complex that captures photons, and an electron transfer chain that converts photonic excitation into a charge separation. The polypeptide is Photosystem II reaction center protein K (Chaetosphaeridium globosum (Charophycean green alga)).